Here is a 471-residue protein sequence, read N- to C-terminus: 3-isopropylmalate dehydratase large subunit (471 aa).

Positions 347, 407, and 410 each coordinate [4Fe-4S] cluster.

It belongs to the aconitase/IPM isomerase family. LeuC type 1 subfamily. In terms of assembly, heterodimer of LeuC and LeuD. It depends on [4Fe-4S] cluster as a cofactor.

The enzyme catalyses (2R,3S)-3-isopropylmalate = (2S)-2-isopropylmalate. It participates in amino-acid biosynthesis; L-leucine biosynthesis; L-leucine from 3-methyl-2-oxobutanoate: step 2/4. Catalyzes the isomerization between 2-isopropylmalate and 3-isopropylmalate, via the formation of 2-isopropylmaleate. The chain is 3-isopropylmalate dehydratase large subunit from Geobacillus sp. (strain WCH70).